The sequence spans 309 residues: Porphobilinogen deaminase (309 aa).

Cysteine 241 bears the S-(dipyrrolylmethanemethyl)cysteine mark.

The protein belongs to the HMBS family. In terms of assembly, monomer. Dipyrromethane is required as a cofactor.

The enzyme catalyses 4 porphobilinogen + H2O = hydroxymethylbilane + 4 NH4(+). The protein operates within porphyrin-containing compound metabolism; protoporphyrin-IX biosynthesis; coproporphyrinogen-III from 5-aminolevulinate: step 2/4. Its function is as follows. Tetrapolymerization of the monopyrrole PBG into the hydroxymethylbilane pre-uroporphyrinogen in several discrete steps. In Geobacillus kaustophilus (strain HTA426), this protein is Porphobilinogen deaminase.